The chain runs to 119 residues: Holo-[acyl-carrier-protein] synthase (119 aa).

2 residues coordinate Mg(2+): Asp8 and Glu58.

The protein belongs to the P-Pant transferase superfamily. AcpS family. Requires Mg(2+) as cofactor.

Its subcellular location is the cytoplasm. It catalyses the reaction apo-[ACP] + CoA = holo-[ACP] + adenosine 3',5'-bisphosphate + H(+). Its function is as follows. Transfers the 4'-phosphopantetheine moiety from coenzyme A to a Ser of acyl-carrier-protein. This Halalkalibacterium halodurans (strain ATCC BAA-125 / DSM 18197 / FERM 7344 / JCM 9153 / C-125) (Bacillus halodurans) protein is Holo-[acyl-carrier-protein] synthase.